Consider the following 155-residue polypeptide: Putative methyl-CpG-binding domain protein 12 (155 aa).

The CW-type zinc finger occupies 1–53 (MVQCTDCKKWRLIPSMQHYNIIKETQLQTPFVCGTTSGWTPNMSCNVPQDGTT). Residues 3 to 45 (QCTDCKKWRLIPSMQHYNIIKETQLQTPFVCGTTSGWTPNMSC) carry the MBD-associated domain (MAD) motif. The Zn(2+) site is built by C4, C7, C33, and C45. The region spanning 53–126 (TCDTWPSIPP…SQFSFQIPKP (74 aa)) is the MBD domain. Positions 130-155 (NYVKKRTRPVKRRKSSKDNNCEKGKK) are disordered. A compositionally biased stretch (basic residues) spans 133–144 (KKRTRPVKRRKS). Positions 140-147 (KRRKSSKD) match the Nuclear localization signal motif. Over residues 145-155 (SKDNNCEKGKK) the composition is skewed to basic and acidic residues.

It localises to the nucleus. In terms of biological role, probable transcriptional regulator. The sequence is that of Putative methyl-CpG-binding domain protein 12 (MBD12) from Arabidopsis thaliana (Mouse-ear cress).